The primary structure comprises 304 residues: Probable aspartoacylase (304 aa).

The Zn(2+) site is built by His13 and Glu16. Substrate-binding positions include Arg55 and 62-63; that span reads NR. His105 serves as a coordination point for Zn(2+). Substrate-binding residues include Glu163 and Tyr273.

Belongs to the AspA/AstE family. Aspartoacylase subfamily. Zn(2+) is required as a cofactor.

The catalysed reaction is an N-acyl-L-aspartate + H2O = a carboxylate + L-aspartate. The sequence is that of Probable aspartoacylase from Prochlorococcus marinus (strain MIT 9313).